A 654-amino-acid polypeptide reads, in one-letter code: tRNA uridine 5-carboxymethylaminomethyl modification enzyme MnmG (654 aa).

17–22 contributes to the FAD binding site; the sequence is GGGHAG. 289–303 is a binding site for NAD(+); the sequence is GPRYCPSIEDKIVKF.

Belongs to the MnmG family. As to quaternary structure, homodimer. Heterotetramer of two MnmE and two MnmG subunits. FAD serves as cofactor.

It localises to the cytoplasm. In terms of biological role, NAD-binding protein involved in the addition of a carboxymethylaminomethyl (cmnm) group at the wobble position (U34) of certain tRNAs, forming tRNA-cmnm(5)s(2)U34. This chain is tRNA uridine 5-carboxymethylaminomethyl modification enzyme MnmG, found in Prochlorococcus marinus (strain MIT 9515).